Consider the following 147-residue polypeptide: UPF0208 membrane protein CGSHiEE_06015 (147 aa).

Helical transmembrane passes span 38 to 58 and 67 to 87; these read FAQKFMPFVAVFAILWQQIYA and IAILTALFALLIPFQGLYWLG.

This sequence belongs to the UPF0208 family.

The protein resides in the cell inner membrane. The polypeptide is UPF0208 membrane protein CGSHiEE_06015 (Haemophilus influenzae (strain PittEE)).